A 314-amino-acid polypeptide reads, in one-letter code: DNA-directed RNA polymerase subunit alpha (314 aa).

Positions 1–228 (MIEFEKPKIH…EHLAIFVNLN (228 aa)) are alpha N-terminal domain (alpha-NTD). The alpha C-terminal domain (alpha-CTD) stretch occupies residues 245-314 (KEKMLEMTIE…LLGLGFRSED (70 aa)).

The protein belongs to the RNA polymerase alpha chain family. In terms of assembly, homodimer. The RNAP catalytic core consists of 2 alpha, 1 beta, 1 beta' and 1 omega subunit. When a sigma factor is associated with the core the holoenzyme is formed, which can initiate transcription.

The enzyme catalyses RNA(n) + a ribonucleoside 5'-triphosphate = RNA(n+1) + diphosphate. Its function is as follows. DNA-dependent RNA polymerase catalyzes the transcription of DNA into RNA using the four ribonucleoside triphosphates as substrates. The polypeptide is DNA-directed RNA polymerase subunit alpha (Pediococcus pentosaceus (strain ATCC 25745 / CCUG 21536 / LMG 10740 / 183-1w)).